The primary structure comprises 228 residues: ATP synthase F(0) complex subunit a (228 aa).

6 consecutive transmembrane segments (helical) span residues 13 to 33 (YFLG…TMFI), 70 to 90 (WALL…TGLL), 100 to 120 (LSLN…MGAT), 140 to 160 (APFL…ALGV), 162 to 182 (LTAN…ALIN), and 190 to 210 (LFLT…VSFI).

Belongs to the ATPase A chain family. As to quaternary structure, component of the ATP synthase complex composed at least of ATP5F1A/subunit alpha, ATP5F1B/subunit beta, ATP5MC1/subunit c (homooctomer), MT-ATP6/subunit a, MT-ATP8/subunit 8, ATP5ME/subunit e, ATP5MF/subunit f, ATP5MG/subunit g, ATP5MK/subunit k, ATP5MJ/subunit j, ATP5F1C/subunit gamma, ATP5F1D/subunit delta, ATP5F1E/subunit epsilon, ATP5PF/subunit F6, ATP5PB/subunit b, ATP5PD/subunit d, ATP5PO/subunit OSCP. ATP synthase complex consists of a soluble F(1) head domain (subunits alpha(3) and beta(3)) - the catalytic core - and a membrane F(0) domain - the membrane proton channel (subunits c, a, 8, e, f, g, k and j). These two domains are linked by a central stalk (subunits gamma, delta, and epsilon) rotating inside the F1 region and a stationary peripheral stalk (subunits F6, b, d, and OSCP). Interacts with DNAJC30; interaction is direct.

The protein localises to the mitochondrion inner membrane. It carries out the reaction H(+)(in) = H(+)(out). Its function is as follows. Subunit a, of the mitochondrial membrane ATP synthase complex (F(1)F(0) ATP synthase or Complex V) that produces ATP from ADP in the presence of a proton gradient across the membrane which is generated by electron transport complexes of the respiratory chain. ATP synthase complex consist of a soluble F(1) head domain - the catalytic core - and a membrane F(1) domain - the membrane proton channel. These two domains are linked by a central stalk rotating inside the F(1) region and a stationary peripheral stalk. During catalysis, ATP synthesis in the catalytic domain of F(1) is coupled via a rotary mechanism of the central stalk subunits to proton translocation. With the subunit c (ATP5MC1), forms the proton-conducting channel in the F(0) domain, that contains two crucial half-channels (inlet and outlet) that facilitate proton movement from the mitochondrial intermembrane space (IMS) into the matrix. Protons are taken up via the inlet half-channel and released through the outlet half-channel, following a Grotthuss mechanism. The sequence is that of ATP synthase F(0) complex subunit a from Myxine glutinosa (Atlantic hagfish).